Reading from the N-terminus, the 727-residue chain is Pre-B-cell leukemia transcription factor-interacting protein 1 (727 aa).

Polar residues predominate over residues M1–S10. Positions M1 to P135 are disordered. Low complexity predominate over residues R39–A53. S43 is subject to Phosphoserine. A compositionally biased stretch (polar residues) spans T61–S70. Residues S130, S134, S147, S148, and S149 each carry the phosphoserine modification. Phosphothreonine is present on T153. 2 coiled-coil regions span residues Q269–D353 and S380–E421. Residues W488 to W506 carry the Nuclear localization signal motif. 2 disordered regions span residues E491–R568 and K701–G727. Composition is skewed to basic and acidic residues over residues E498–R544, P551–R568, and G716–G727. Positions D696–E719 match the Nuclear localization signal motif.

As to quaternary structure, interacts with ESR1, PBX1, PBX2 and PBX3. Interacts with TEX11.

It localises to the cytoplasm. The protein localises to the cytoskeleton. It is found in the nucleus. Its function is as follows. Regulator of pre-B-cell leukemia transcription factors (BPXs) function. Inhibits the binding of PBX1-HOX complex to DNA and blocks the transcriptional activity of E2A-PBX1. Tethers estrogen receptor-alpha (ESR1) to microtubules and allows them to influence estrogen receptors-alpha signaling. The protein is Pre-B-cell leukemia transcription factor-interacting protein 1 (PBXIP1) of Bos taurus (Bovine).